Reading from the N-terminus, the 156-residue chain is MPRKGHISKRDVLPDPIYGSKTVTKLINNVMYDGKKGIAQQICYDAFDIIKEKTGRDPLEVFEEAMANIMPVLEVKARRVGGATYQVPMEVRPDRRQALGLRWLVDYSRKRGERTMRERLSGEILDAINNMGGAYKKKEDTHKMAEANRAFAHYRW.

It belongs to the universal ribosomal protein uS7 family. Part of the 30S ribosomal subunit. Contacts proteins S9 and S11.

Functionally, one of the primary rRNA binding proteins, it binds directly to 16S rRNA where it nucleates assembly of the head domain of the 30S subunit. Is located at the subunit interface close to the decoding center, probably blocks exit of the E-site tRNA. The chain is Small ribosomal subunit protein uS7 from Ruminiclostridium cellulolyticum (strain ATCC 35319 / DSM 5812 / JCM 6584 / H10) (Clostridium cellulolyticum).